Here is a 108-residue protein sequence, read N- to C-terminus: Nucleoid-associated protein HEAR1046 (108 aa).

A disordered region spans residues 86-108 (TSQEKMAGATAGMPMPPGFKMPF). Residues 99–108 (PMPPGFKMPF) are compositionally biased toward pro residues.

Belongs to the YbaB/EbfC family. In terms of assembly, homodimer.

It is found in the cytoplasm. The protein resides in the nucleoid. In terms of biological role, binds to DNA and alters its conformation. May be involved in regulation of gene expression, nucleoid organization and DNA protection. The protein is Nucleoid-associated protein HEAR1046 of Herminiimonas arsenicoxydans.